The sequence spans 127 residues: Aspartate 1-decarboxylase (127 aa).

Catalysis depends on S25, which acts as the Schiff-base intermediate with substrate; via pyruvic acid. S25 bears the Pyruvic acid (Ser) mark. Residue T57 coordinates substrate. The Proton donor role is filled by Y58. 73 to 75 provides a ligand contact to substrate; the sequence is GAA.

It belongs to the PanD family. In terms of assembly, heterooctamer of four alpha and four beta subunits. It depends on pyruvate as a cofactor. Is synthesized initially as an inactive proenzyme, which is activated by self-cleavage at a specific serine bond to produce a beta-subunit with a hydroxyl group at its C-terminus and an alpha-subunit with a pyruvoyl group at its N-terminus.

Its subcellular location is the cytoplasm. The catalysed reaction is L-aspartate + H(+) = beta-alanine + CO2. The protein operates within cofactor biosynthesis; (R)-pantothenate biosynthesis; beta-alanine from L-aspartate: step 1/1. Catalyzes the pyruvoyl-dependent decarboxylation of aspartate to produce beta-alanine. The protein is Aspartate 1-decarboxylase of Halalkalibacterium halodurans (strain ATCC BAA-125 / DSM 18197 / FERM 7344 / JCM 9153 / C-125) (Bacillus halodurans).